The chain runs to 187 residues: UPF0301 protein YqgE (187 aa).

Belongs to the UPF0301 (AlgH) family.

The sequence is that of UPF0301 protein YqgE from Escherichia fergusonii (strain ATCC 35469 / DSM 13698 / CCUG 18766 / IAM 14443 / JCM 21226 / LMG 7866 / NBRC 102419 / NCTC 12128 / CDC 0568-73).